We begin with the raw amino-acid sequence, 263 residues long: Large ribosomal subunit protein uL29m (263 aa).

Disordered stretches follow at residues 51-92 (ARVT…EELP) and 208-263 (PEID…APRV). Basic and acidic residues predominate over residues 53–66 (VTRDNSKQRGESAL). Positions 214–223 (NPENPYTPST) are enriched in polar residues. Positions 233 to 245 (GAEASETQSTTTE) are enriched in low complexity. Over residues 246–257 (IDPTTIPSSKSQ) the composition is skewed to polar residues.

The protein belongs to the universal ribosomal protein uL29 family. Component of the mitochondrial large ribosomal subunit (mt-LSU). Mature N.crassa 74S mitochondrial ribosomes consist of a small (37S) and a large (54S) subunit. The 37S small subunit contains a 16S ribosomal RNA (16S mt-rRNA) and 32 different proteins. The 54S large subunit contains a 23S rRNA (23S mt-rRNA) and 42 different proteins.

The protein resides in the mitochondrion. Functionally, component of the mitochondrial ribosome (mitoribosome), a dedicated translation machinery responsible for the synthesis of mitochondrial genome-encoded proteins, including at least some of the essential transmembrane subunits of the mitochondrial respiratory chain. The mitoribosomes are attached to the mitochondrial inner membrane and translation products are cotranslationally integrated into the membrane. This chain is Large ribosomal subunit protein uL29m (mrpl4), found in Neurospora crassa (strain ATCC 24698 / 74-OR23-1A / CBS 708.71 / DSM 1257 / FGSC 987).